The sequence spans 523 residues: Factor arrest protein 8 (523 aa).

The stretch at 26 to 76 (TKNERDRITWELERSEMKARIAELEGENRDLKHQLNQIQSKAVSPEGEKEE) forms a coiled coil. The interval 61 to 80 (NQIQSKAVSPEGEKEEKHVP) is disordered. A compositionally biased stretch (basic and acidic residues) spans 71 to 80 (EGEKEEKHVP). Serine 115 carries the post-translational modification Phosphoserine. Threonine 132 carries the phosphothreonine modification. Residues 150–171 (ALLDTKPNPKQGPSESPSPTKV) form a disordered region. A compositionally biased stretch (polar residues) spans 160-171 (QGPSESPSPTKV).

Component of a complex at least composed of FAR3, FAR7, FAR8, FAR10, FAR11 and VPS64.

The protein resides in the cytoplasm. The protein localises to the endoplasmic reticulum. Functionally, participates in the control of the reentry into the cell cycle following pheromone treatment. This is Factor arrest protein 8 (FAR8) from Saccharomyces cerevisiae (strain ATCC 204508 / S288c) (Baker's yeast).